The following is a 579-amino-acid chain: Proline--tRNA ligase (579 aa).

Belongs to the class-II aminoacyl-tRNA synthetase family. ProS type 1 subfamily. In terms of assembly, homodimer.

Its subcellular location is the cytoplasm. It catalyses the reaction tRNA(Pro) + L-proline + ATP = L-prolyl-tRNA(Pro) + AMP + diphosphate. Its function is as follows. Catalyzes the attachment of proline to tRNA(Pro) in a two-step reaction: proline is first activated by ATP to form Pro-AMP and then transferred to the acceptor end of tRNA(Pro). As ProRS can inadvertently accommodate and process non-cognate amino acids such as alanine and cysteine, to avoid such errors it has two additional distinct editing activities against alanine. One activity is designated as 'pretransfer' editing and involves the tRNA(Pro)-independent hydrolysis of activated Ala-AMP. The other activity is designated 'posttransfer' editing and involves deacylation of mischarged Ala-tRNA(Pro). The misacylated Cys-tRNA(Pro) is not edited by ProRS. The protein is Proline--tRNA ligase of Hamiltonella defensa subsp. Acyrthosiphon pisum (strain 5AT).